Here is a 558-residue protein sequence, read N- to C-terminus: Poly(A) polymerase PAPalpha (558 aa).

The segment covering 1 to 17 has biased composition (polar residues); that stretch reads MNTKTYGVTEPISTNGP. The disordered stretch occupies residues 1 to 20; sequence MNTKTYGVTEPISTNGPTPK. ATP contacts are provided by residues 86–88, 99–101, aspartate 153, lysine 214, tyrosine 223, and 232–233; these read FGS, DID, and GV. Aspartate 99, aspartate 101, and aspartate 153 together coordinate Mg(2+). The interval 516–558 is disordered; that stretch reads VYEDGEERPKKSGKKRKKVIKEDGQKRVRNESPASSASVNGSS. Basic and acidic residues predominate over residues 535-545; the sequence is IKEDGQKRVRN. Positions 547 to 558 are enriched in low complexity; it reads SPASSASVNGSS.

It belongs to the poly(A) polymerase family. Requires Mg(2+) as cofactor. The cofactor is Mn(2+).

The protein resides in the nucleus. The catalysed reaction is RNA(n) + ATP = RNA(n)-3'-adenine ribonucleotide + diphosphate. Polymerase that creates the 3'-poly(A) tail of mRNA's. May acquire specificity through interaction with a cleavage and polyadenylation factor. The polypeptide is Poly(A) polymerase PAPalpha (PAPALPHA) (Candida albicans (strain SC5314 / ATCC MYA-2876) (Yeast)).